We begin with the raw amino-acid sequence, 151 residues long: Cell division protein SepF (151 aa).

Belongs to the SepF family. As to quaternary structure, homodimer. Interacts with FtsZ.

It is found in the cytoplasm. In terms of biological role, cell division protein that is part of the divisome complex and is recruited early to the Z-ring. Probably stimulates Z-ring formation, perhaps through the cross-linking of FtsZ protofilaments. Its function overlaps with FtsA. This Desulfitobacterium hafniense (strain Y51) protein is Cell division protein SepF.